A 137-amino-acid chain; its full sequence is MALKYLLDTSVIKRLSRPAVRRAVEPLAEAGAVARTQITDLEVGYSARNETEWQRLMVALSAFDLIESTASHHRRALGIQRLLAARSQRGRKIPDLLIAAAGEEHGLVVLHYDADFDLIAAVTGQPCQWIVPAGTID.

The region spanning 5–120 is the PINc domain; the sequence is YLLDTSVIKR…HYDADFDLIA (116 aa). Positions 8 and 95 each coordinate Mg(2+).

The protein belongs to the PINc/VapC protein family. Requires Mg(2+) as cofactor.

Its function is as follows. Toxic component of a type II toxin-antitoxin (TA) system. An RNase. Its cognate antitoxin is VapB51. The sequence is that of Ribonuclease VapC51 from Mycobacterium tuberculosis (strain ATCC 25618 / H37Rv).